Here is a 141-residue protein sequence, read N- to C-terminus: Hemoglobin subunit alpha-1/2 (141 aa).

A Globin domain is found at 1 to 141; the sequence is VLSPADKTNV…VSTVLTSKYR (141 aa). S3 carries the phosphoserine modification. An N6-succinyllysine modification is found at K7. A Phosphothreonine modification is found at T8. K11 bears the N6-succinyllysine mark. K16 is subject to N6-acetyllysine; alternate. Residue K16 is modified to N6-succinyllysine; alternate. Y24 carries the post-translational modification Phosphotyrosine. S35 carries the post-translational modification Phosphoserine. N6-succinyllysine is present on K40. S49 carries the phosphoserine modification. Residue H58 participates in O2 binding. H87 serves as a coordination point for heme b. Residue S102 is modified to Phosphoserine. The residue at position 108 (T108) is a Phosphothreonine. S124 carries the phosphoserine modification. Phosphothreonine is present on residues T134 and T137. S138 carries the post-translational modification Phosphoserine.

It belongs to the globin family. Heterotetramer of two alpha chains and two beta chains. Red blood cells.

In terms of biological role, involved in oxygen transport from the lung to the various peripheral tissues. This is Hemoglobin subunit alpha-1/2 from Mustela putorius (European polecat).